The sequence spans 917 residues: Major intrinsically disordered Notch2-binding receptor 1 (917 aa).

The Cytoplasmic portion of the chain corresponds to 1-892 (MEANQEASLF…AEFRRAKVCK (892 aa)). Disordered stretches follow at residues 337-367 (STYFGPTPVMGTQDTRRCPGRPSKQTPWPAK), 389-410 (SEEKLRYPNSGNQTPNFSGPDR), 457-476 (DKSISCTSGQHSSDTSSVGT), 568-588 (ITNGVSGSKGDKCNRPENVHH), 652-679 (SEAPSDDSASPRVFHAHSGSHGPKLENS), 706-727 (TRPSSRSLTEENSATESKIASI), and 746-783 (NEEEIKDAGPANNKDWHRKSKEADRQYDIPPQHRLPKQ). Residues 460–476 (ISCTSGQHSSDTSSVGT) show a composition bias toward polar residues. A compositionally biased stretch (basic and acidic residues) spans 576–588 (KGDKCNRPENVHH). Residue Ser712 is modified to Phosphoserine. A helical transmembrane segment spans residues 893 to 913 (IAALITAAACTVILVIVVPIC). Over 914–917 (TMKS) the chain is Extracellular.

This sequence belongs to the MINAR family. In terms of assembly, interacts with NOTCH2; this interaction increases MINAR1 stability. Interacts (via N-terminus) with DEPTOR (via PDZ domain); this interaction may stabilize DEPTOR protein by impairing its ubiquitination.

It localises to the cell membrane. In terms of biological role, intrinsically disordered protein which may negatively regulate mTOR signaling pathway by stabilizing the mTOR complex component DEPTOR. Negatively regulates angiogenesis. Negatively regulates cell growth. Negatively regulates neurite outgrowth in hippocampal neurons. The polypeptide is Major intrinsically disordered Notch2-binding receptor 1 (Minar1) (Rattus norvegicus (Rat)).